The sequence spans 308 residues: Cysteine synthase (308 aa).

At Lys-45 the chain carries N6-(pyridoxal phosphate)lysine. Pyridoxal 5'-phosphate contacts are provided by residues Asn-75, 179 to 183, and Ser-267; that span reads GTGGT.

The protein belongs to the cysteine synthase/cystathionine beta-synthase family. As to quaternary structure, homodimer. Forms CymR(2):CysK(2) or CymR(4):CysK(4) complexes in the absence of O-acetylserine. The cofactor is pyridoxal 5'-phosphate.

It carries out the reaction O-acetyl-L-serine + hydrogen sulfide = L-cysteine + acetate. It participates in amino-acid biosynthesis; L-cysteine biosynthesis; L-cysteine from L-serine: step 2/2. Functionally, catalyzes the conversion of O-acetylserine to cysteine. Also acts as a sensor of cysteine availability in the signal transduction pathway modulating CymR activity. When cysteine is present, the pool of O-acetylserine (OAS) is low, which leads to the formation of a CymR-CysK complex and transcriptional repression of the CymR regulon occurs. In the absence of cysteine, the OAS pool is high and the CymR-CysK complex is mostly dissociated, leading to a faster dissociation of CymR from its DNA targets and the lifting of CymR-dependent repression. In Bacillus subtilis (strain 168), this protein is Cysteine synthase (cysK).